A 56-amino-acid chain; its full sequence is Large ribosomal subunit protein bL33 (56 aa).

This sequence belongs to the bacterial ribosomal protein bL33 family.

In Rickettsia africae (strain ESF-5), this protein is Large ribosomal subunit protein bL33.